The chain runs to 166 residues: Large ribosomal subunit protein uL10 (166 aa).

Belongs to the universal ribosomal protein uL10 family. In terms of assembly, part of the ribosomal stalk of the 50S ribosomal subunit. The N-terminus interacts with L11 and the large rRNA to form the base of the stalk. The C-terminus forms an elongated spine to which L12 dimers bind in a sequential fashion forming a multimeric L10(L12)X complex.

Forms part of the ribosomal stalk, playing a central role in the interaction of the ribosome with GTP-bound translation factors. The sequence is that of Large ribosomal subunit protein uL10 (rplJ) from Streptococcus pyogenes serotype M1.